A 438-amino-acid chain; its full sequence is DEAD-box ATP-dependent RNA helicase CshB (438 aa).

The Q motif motif lies at 4-32 (TKFELYELKPFIIDAVHRLGFYEPTDIQK). A Helicase ATP-binding domain is found at 35 to 208 (IPAVLKKESV…KKYMENPKYA (174 aa)). Residue 48-55 (SQTGTGKT) coordinates ATP. The DEAD box signature appears at 156-159 (DEAD). Positions 235-385 (LLFDIMSHLN…EWKKGDDRQR (151 aa)) constitute a Helicase C-terminal domain. Residues 380 to 438 (GDDRQRRKKRKKTPNEADEIAHRLVKKPKKVKPGYKKKMSYEMEKIKKKQRRNQSKKRK) form a disordered region. Residues 392–401 (TPNEADEIAH) show a composition bias toward basic and acidic residues. Composition is skewed to basic residues over residues 402–417 (RLVKKPKKVKPGYKKK) and 425–438 (IKKKQRRNQSKKRK).

This sequence belongs to the DEAD box helicase family. As to quaternary structure, interacts with CspB when cells are transcriptionally active. May interact with RNA helicases CshA and DbpA (DeaD), may be a component of a possible RNA degradosome complex composed of rny, rnja, rnjb, pnp, pfkA and eno (although rnjA and rnjB's presence is unclear). Specifically interacts with pnp and rny.

It is found in the cytoplasm. Its subcellular location is the nucleoid. The catalysed reaction is ATP + H2O = ADP + phosphate + H(+). Its function is as follows. DEAD-box RNA helicase that plays a role in 70S ribosome assembly. May work in conjunction with the cold shock proteins to ensure proper initiation of transcription at low and optimal temperatures. This is DEAD-box ATP-dependent RNA helicase CshB from Bacillus subtilis (strain 168).